The chain runs to 513 residues: Glycogen synthase (513 aa).

ADP-alpha-D-glucose is bound at residue Lys-47.

It belongs to the glycosyltransferase 1 family. Bacterial/plant glycogen synthase subfamily.

It catalyses the reaction [(1-&gt;4)-alpha-D-glucosyl](n) + ADP-alpha-D-glucose = [(1-&gt;4)-alpha-D-glucosyl](n+1) + ADP + H(+). Its pathway is glycan biosynthesis; glycogen biosynthesis. Functionally, synthesizes alpha-1,4-glucan chains using ADP-glucose. The sequence is that of Glycogen synthase from Pseudomonas aeruginosa (strain ATCC 15692 / DSM 22644 / CIP 104116 / JCM 14847 / LMG 12228 / 1C / PRS 101 / PAO1).